Reading from the N-terminus, the 311-residue chain is uncharacterized protein (311 aa).

10 helical membrane-spanning segments follow: residues 6–26 (IFIL…KMLA), 33–53 (PFQV…PMAV), 70–90 (YLAL…QFAV), 97–117 (TAAV…YFIL), 123–143 (GITI…FNPA), 155–175 (LIGI…TVIS), 185–205 (YVFN…LLVV), 219–239 (ILVL…CYLG), 244–264 (TSAV…TVLA), and 265–285 (ILIL…FIII). 2 consecutive EamA domains span residues 12–141 (AIFY…IIFN) and 166–292 (VVWS…INYS).

The protein belongs to the EamA transporter family.

The protein localises to the cell membrane. This is an uncharacterized protein from Clostridium kluyveri (strain ATCC 8527 / DSM 555 / NBRC 12016 / NCIMB 10680 / K1).